The primary structure comprises 261 residues: Zinc finger protein 664 (261 aa).

9 C2H2-type zinc fingers span residues 3-25 (YKCPMCREFFSERADLFMHQKIH), 31-53 (HKCDKCDKGFFHISELHIHWRDH), 59-81 (YKCDDCVKDFSTTTKLNRHKKIH), 87-109 (YKCYECGKAFNWSSHLQIHMRVH), 115-137 (YVCSECGRGFSNSSNLCMHQRVH), 143-165 (FKCEECGKAFRHTSSLCMHQRVH), 171-193 (YKCYECGKAFSQSSSLCIHQRVH), 199-221 (YRCCGCGKAFSQSSSLCIHQRVH), and 227-249 (FKCDECGKAFSQSTSLCIHQRVH). K257 participates in a covalent cross-link: Glycyl lysine isopeptide (Lys-Gly) (interchain with G-Cter in SUMO2).

The protein belongs to the krueppel C2H2-type zinc-finger protein family.

It localises to the nucleus. May be involved in transcriptional regulation. In Mus musculus (Mouse), this protein is Zinc finger protein 664 (Znf664).